A 211-amino-acid polypeptide reads, in one-letter code: Urease accessory protein UreG (211 aa).

Position 13–20 (glycine 13–threonine 20) interacts with GTP.

It belongs to the SIMIBI class G3E GTPase family. UreG subfamily. In terms of assembly, homodimer. UreD, UreF and UreG form a complex that acts as a GTP-hydrolysis-dependent molecular chaperone, activating the urease apoprotein by helping to assemble the nickel containing metallocenter of UreC. The UreE protein probably delivers the nickel.

The protein localises to the cytoplasm. In terms of biological role, facilitates the functional incorporation of the urease nickel metallocenter. This process requires GTP hydrolysis, probably effectuated by UreG. The sequence is that of Urease accessory protein UreG from Alkalilimnicola ehrlichii (strain ATCC BAA-1101 / DSM 17681 / MLHE-1).